Here is a 1149-residue protein sequence, read N- to C-terminus: Eukaryotic translation initiation factor 3 subunit A (1149 aa).

The 182-residue stretch at 317 to 498 (IQRMTSHVLI…HSVHFGTDLS (182 aa)) folds into the PCI domain. 2 disordered regions span residues 496–515 (DLSE…QSMP) and 811–1149 (EEER…KHHR). A compositionally biased stretch (basic and acidic residues) spans 811 to 885 (EEERRRIEEE…APRGEKEERG (75 aa)). Over residues 886–895 (GGGGGGGAWR) the composition is skewed to gly residues. Over residues 908–924 (AKPESDWRNAREAREPA) the composition is skewed to basic and acidic residues. The segment covering 925–937 (PESAGASSAAAPA) has biased composition (low complexity). Composition is skewed to basic and acidic residues over residues 961 to 970 (RPPRGDDREP), 1005 to 1095 (GPMR…DRRG), and 1113 to 1132 (EPAK…KEAR).

It belongs to the eIF-3 subunit A family. As to quaternary structure, component of the eukaryotic translation initiation factor 3 (eIF-3) complex.

The protein resides in the cytoplasm. Its function is as follows. RNA-binding component of the eukaryotic translation initiation factor 3 (eIF-3) complex, which is involved in protein synthesis of a specialized repertoire of mRNAs and, together with other initiation factors, stimulates binding of mRNA and methionyl-tRNAi to the 40S ribosome. The eIF-3 complex specifically targets and initiates translation of a subset of mRNAs involved in cell proliferation. In Culex quinquefasciatus (Southern house mosquito), this protein is Eukaryotic translation initiation factor 3 subunit A.